Here is a 280-residue protein sequence, read N- to C-terminus: MIKITQNIECSNAAPFVLFGGINVLESEDLALTACAEYVRVTEKLGIPYVFKASFDKANRSSIHSYRGPGMEEGLRIFEKVKAEFGVPIITDVHEIYQCAPVAEVVDVLQLPAFLARQTDLVVALAKTGKPVNIKKPQFLSPSQMQNIVQKFKEAGNDQLILCDRGTCMGYDNLVVDMLGFGVMKRTCDDLPIIFDVTHALQNRDPSGAASGGRREQVVDLARAGMGVGLAGLFLEAHPNPDQAKCDGPSALPLDKLEPFLAQIKALDDLVKSFPPLVIG.

The protein belongs to the KdsA family.

It localises to the cytoplasm. The catalysed reaction is D-arabinose 5-phosphate + phosphoenolpyruvate + H2O = 3-deoxy-alpha-D-manno-2-octulosonate-8-phosphate + phosphate. The protein operates within carbohydrate biosynthesis; 3-deoxy-D-manno-octulosonate biosynthesis; 3-deoxy-D-manno-octulosonate from D-ribulose 5-phosphate: step 2/3. Its pathway is bacterial outer membrane biogenesis; lipopolysaccharide biosynthesis. In Pseudomonas putida (strain W619), this protein is 2-dehydro-3-deoxyphosphooctonate aldolase.